The sequence spans 481 residues: GTPase Der (481 aa).

2 consecutive EngA-type G domains span residues 3–166 (PVVA…ESDF) and 194–367 (IKLA…MSAT). GTP-binding positions include 9-16 (GRPNVGKS), 56-60 (DTGGI), 118-121 (NKVD), 200-207 (GKPNVGKS), 247-251 (DTAGV), and 312-315 (NKWD). The 85-residue stretch at 368–452 (KRINTALLTQ…PIKIEFREGN (85 aa)) folds into the KH-like domain.

It belongs to the TRAFAC class TrmE-Era-EngA-EngB-Septin-like GTPase superfamily. EngA (Der) GTPase family. In terms of assembly, associates with the 50S ribosomal subunit.

Its function is as follows. GTPase that plays an essential role in the late steps of ribosome biogenesis. This chain is GTPase Der, found in Alteromonas mediterranea (strain DSM 17117 / CIP 110805 / LMG 28347 / Deep ecotype).